Consider the following 182-residue polypeptide: Ribosome maturation factor RimM (182 aa).

In terms of domain architecture, PRC barrel spans 103–182; that stretch reads GDDYYWKDLM…VIEADWDPGF (80 aa).

The protein belongs to the RimM family. As to quaternary structure, binds ribosomal protein uS19.

It is found in the cytoplasm. Functionally, an accessory protein needed during the final step in the assembly of 30S ribosomal subunit, possibly for assembly of the head region. Essential for efficient processing of 16S rRNA. May be needed both before and after RbfA during the maturation of 16S rRNA. It has affinity for free ribosomal 30S subunits but not for 70S ribosomes. This is Ribosome maturation factor RimM from Serratia proteamaculans (strain 568).